The following is a 428-amino-acid chain: Synaptotagmin-1 (428 aa).

The Vesicular segment spans residues 1–67; sequence MDSLLARVKR…KDKLINEIEN (67 aa). The interval 16–50 is disordered; that stretch reads ALNPAQEGVTGGPDAAGLPDVSTSSPGGGGAGDKL. A helical transmembrane segment spans residues 68-92; the sequence is LPIWAIVLIIAGSLLFLVCCVYCVC. At 93-428 the chain is on the cytoplasmic side; sequence RRSCRKRKKK…HTLQEVPEKN (336 aa). Ser123 is subject to Phosphoserine; by PRKC2. Residues 147–395 form a phospholipid binding region; sequence STKSEVKLGK…PIGRCVLGCN (249 aa). C2 domains are found at residues 153 to 272 and 286 to 419; these read KLGK…EDWK and KLGD…AQWH. Residues Asp184, Asp190, Asp242, Phe243, Asp244, Ser247, Lys248, Asp250, Asp317, Asp323, Asp377, and Asp379 each coordinate Ca(2+).

The protein belongs to the synaptotagmin family. In terms of assembly, binds SNAP25. Isoform 3 binds SNAP25 with higher affinity. The cofactor is Ca(2+).

It is found in the cytoplasmic vesicle. The protein resides in the secretory vesicle. The protein localises to the synaptic vesicle membrane. Its subcellular location is the synapse. Its function is as follows. Acts as inhibitor of neurotransmitter release. Overexpression leads to a decrease in the amplitude of the excitatory postsynaptic potential in dissected cholinergic and glutaminergic neurons while depletion with antisense oligonucleotides leads to an increase. Overexpression of isoform 1 blocks the reversal of synaptic depression by serotonin in sensory neurons. The sequence is that of Synaptotagmin-1 (SYT1) from Aplysia californica (California sea hare).